Consider the following 428-residue polypeptide: Adenylosuccinate synthetase (428 aa).

Residues 12–18 (GDEGKGK) and 40–42 (GHT) contribute to the GTP site. Asp-13 functions as the Proton acceptor in the catalytic mechanism. The Mg(2+) site is built by Asp-13 and Gly-40. Residues 13–16 (DEGK), 38–41 (NAGH), Thr-128, Arg-142, Gln-222, Thr-237, and Arg-301 contribute to the IMP site. Residue His-41 is the Proton donor of the active site. 297–303 (TVTGRSR) contributes to the substrate binding site. GTP contacts are provided by residues Arg-303, 329-331 (KLD), and 411-413 (STS).

Belongs to the adenylosuccinate synthetase family. Homodimer. Requires Mg(2+) as cofactor.

The protein localises to the cytoplasm. It carries out the reaction IMP + L-aspartate + GTP = N(6)-(1,2-dicarboxyethyl)-AMP + GDP + phosphate + 2 H(+). Its pathway is purine metabolism; AMP biosynthesis via de novo pathway; AMP from IMP: step 1/2. Plays an important role in the de novo pathway of purine nucleotide biosynthesis. Catalyzes the first committed step in the biosynthesis of AMP from IMP. The chain is Adenylosuccinate synthetase from Phenylobacterium zucineum (strain HLK1).